Reading from the N-terminus, the 333-residue chain is Nucleoid-associated protein APL_0429 (333 aa).

It belongs to the YejK family.

It localises to the cytoplasm. Its subcellular location is the nucleoid. This chain is Nucleoid-associated protein APL_0429, found in Actinobacillus pleuropneumoniae serotype 5b (strain L20).